A 558-amino-acid polypeptide reads, in one-letter code: DNA ligase B (558 aa).

The active-site N6-AMP-lysine intermediate is the Lys126.

Belongs to the NAD-dependent DNA ligase family. LigB subfamily.

The enzyme catalyses NAD(+) + (deoxyribonucleotide)n-3'-hydroxyl + 5'-phospho-(deoxyribonucleotide)m = (deoxyribonucleotide)n+m + AMP + beta-nicotinamide D-nucleotide.. Catalyzes the formation of phosphodiester linkages between 5'-phosphoryl and 3'-hydroxyl groups in double-stranded DNA using NAD as a coenzyme and as the energy source for the reaction. This is DNA ligase B from Pseudomonas fluorescens (strain Pf0-1).